An 837-amino-acid chain; its full sequence is Neural cell adhesion molecule 2 (837 aa).

The signal sequence occupies residues 1 to 19 (MSLLLSFYLLGLLVSSGQA). Residues 20 to 697 (LLQVTISLSK…PNIIKDTLFN (678 aa)) are Extracellular-facing. Ig-like C2-type domains follow at residues 21-108 (LQVT…ATVV), 113-202 (QKLT…RDII), 208-297 (PPAI…AFLQ), 302-396 (PHII…MYLD), and 401-491 (PKFI…YILA). Intrachain disulfides connect Cys42-Cys93 and Cys136-Cys186. Residues Asn177 and Asn219 are each glycosylated (N-linked (GlcNAc...) asparagine). The cysteines at positions 232 and 281 are disulfide-linked. Asn309 carries N-linked (GlcNAc...) asparagine glycosylation. Cys322 and Cys380 are oxidised to a cystine. N-linked (GlcNAc...) asparagine glycans are attached at residues Asn406, Asn419, Asn445, Asn474, and Asn562. An intrachain disulfide couples Cys422 to Cys475. Fibronectin type-III domains are found at residues 498-591 (SPYG…TLPV) and 593-688 (EPSP…PPKP). The chain crosses the membrane as a helical span at residues 698–718 (GLGLGAVIGLGVAALLLILVV). The Cytoplasmic portion of the chain corresponds to 719–837 (TDVSCFFIRQ…IQSKEDDSKA (119 aa)). Over residues 764 to 785 (GSKEPIVEMRTEDERVTNHEDG) the composition is skewed to basic and acidic residues. Positions 764-818 (GSKEPIVEMRTEDERVTNHEDGSPVNEPNETTPLTEPEKLPLKEEDGKEALNPET) are disordered. Residue Ser765 is modified to Phosphoserine. Thr780 is modified (phosphothreonine). At Ser786 the chain carries Phosphoserine. Residues 789–798 (NEPNETTPLT) are compositionally biased toward low complexity. The span at 799-814 (EPEKLPLKEEDGKEAL) shows a compositional bias: basic and acidic residues.

In terms of tissue distribution, expressed most strongly in adult and fetal brain.

It is found in the cell membrane. Its function is as follows. May play important roles in selective fasciculation and zone-to-zone projection of the primary olfactory axons. The polypeptide is Neural cell adhesion molecule 2 (NCAM2) (Homo sapiens (Human)).